The chain runs to 488 residues: N-succinylglutamate 5-semialdehyde dehydrogenase (488 aa).

Residue Gly221–Gly226 participates in NAD(+) binding. Active-site residues include Glu244 and Cys278.

Belongs to the aldehyde dehydrogenase family. AstD subfamily.

The enzyme catalyses N-succinyl-L-glutamate 5-semialdehyde + NAD(+) + H2O = N-succinyl-L-glutamate + NADH + 2 H(+). Its pathway is amino-acid degradation; L-arginine degradation via AST pathway; L-glutamate and succinate from L-arginine: step 4/5. In terms of biological role, catalyzes the NAD-dependent reduction of succinylglutamate semialdehyde into succinylglutamate. This is N-succinylglutamate 5-semialdehyde dehydrogenase from Pseudomonas fluorescens (strain SBW25).